The chain runs to 470 residues: Probable glycosyltransferase At3g07620 (470 aa).

At 1 to 7 (MRDYIPK) the chain is on the cytoplasmic side. The chain crosses the membrane as a helical; Signal-anchor span at residues 8–28 (YLNAFLLAFATFAVGFAIFIA). Residues 29-470 (KDSNSSSHLY…WLRRLNVKLL (442 aa)) lie on the Lumenal side of the membrane. Asn32, Asn73, Asn105, Asn236, Asn274, and Asn299 each carry an N-linked (GlcNAc...) asparagine glycan.

It belongs to the glycosyltransferase 47 family.

It is found in the golgi apparatus membrane. In terms of biological role, may be involved in cell wall biosynthesis. In Arabidopsis thaliana (Mouse-ear cress), this protein is Probable glycosyltransferase At3g07620.